The following is a 95-amino-acid chain: Cystatin-A2 (95 aa).

Residues 47–51 (QLVNG) carry the Secondary area of contact motif.

The protein belongs to the cystatin family.

Its subcellular location is the cytoplasm. Intracellular thiol proteinase inhibitor. Inhibits cathepsin B, but not papain. In Dictyostelium discoideum (Social amoeba), this protein is Cystatin-A2 (cpiB).